We begin with the raw amino-acid sequence, 423 residues long: Serine/threonine-protein kinase ppk25 (423 aa).

Residues S36 and S38 each carry the phosphoserine modification. The region spanning 53 to 305 (WIIKKTIGAG…LEQAAKFPWL (253 aa)) is the Protein kinase domain. Residues 59-67 (IGAGSMGKV) and K82 each bind ATP. D175 serves as the catalytic Proton acceptor.

This sequence belongs to the protein kinase superfamily. Ser/Thr protein kinase family.

Its subcellular location is the cytoplasm. The catalysed reaction is L-seryl-[protein] + ATP = O-phospho-L-seryl-[protein] + ADP + H(+). It catalyses the reaction L-threonyl-[protein] + ATP = O-phospho-L-threonyl-[protein] + ADP + H(+). The polypeptide is Serine/threonine-protein kinase ppk25 (ppk25) (Schizosaccharomyces pombe (strain 972 / ATCC 24843) (Fission yeast)).